The chain runs to 168 residues: uncharacterized protein (168 aa).

The 62-residue stretch at 19–80 (LDKLDRHILN…VVSPKAVGRT (62 aa)) folds into the HTH asnC-type domain. The segment at residues 38–57 (LKELSEKVNSSVATCQRRVQ) is a DNA-binding region (H-T-H motif).

This is an uncharacterized protein from Haemophilus influenzae (strain ATCC 51907 / DSM 11121 / KW20 / Rd).